Reading from the N-terminus, the 223-residue chain is Pre-protein VI (223 aa).

Positions 1-27 (MAYSRLAPHCGLPVYGHHIGNSEMSGG) are excised as a propeptide. The tract at residues 28 to 51 (FSWSSLGSSLSSGLSRIGSFLGST) is amphipathic alpha-helix essential for membrane lytic activity. Residues 29–50 (SWSSLGSSLSSGLSRIGSFLGS) form an involved in endosomal membrane lysis region. Interaction with hexon protein regions lie at residues 45–71 (GSFL…FLKS) and 206–212 (LEDMLGD). 2 consecutive short sequence motifs (nuclear export signal) follow at residues 64–73 (AKEGFLKSGV) and 204–215 (SALEDMLGDGVC). Residues 213–223 (GVCYRSKRYCY) form a binds to importin alpha/beta, involved in hexon nuclear import region.

This sequence belongs to the adenoviridae protein VI family. Interacts with hexon protein; this interaction allows nuclear import of hexon trimers and possibly pre-capsid assembly. Interacts (via C-terminal NLS) with importin alpha/beta. As to quaternary structure, interacts (via PPxY motif) with host NEDD4 ubiquitine ligase; this interaction might play a role in virus intracellular transport during entry. Part of a complex composed of the core-capsid bridging protein, the endosome lysis protein VI and the hexon-linking protein VIII; these interactions bridge the virus core to the capsid. Interacts with peripentonal hexons; this interaction stabilizes the capsid by gluing two peripentonal hexons together and joining them with an adjacent group-of-nine hexon. In terms of assembly, heterodimer with the viral protease; disulfide-linked. Interacts with the viral protease. In terms of processing, ubiquitinated by Nedd4 following partial capsid disassembly; which might play a role in intracellular virus movement during entry. Contains the major nuclear import and export signals. Proteolytically removed during virion maturation. The processing of the C-terminus turns the precursor into a mature viral structural protein and abrogates its ability to promote hexon import and act as a potential chaperone protein.

Its subcellular location is the host nucleus. The protein resides in the host cytoplasm. The protein localises to the virion. Functionally, during virus assembly, promotes hexon trimers nuclear import through nuclear pore complexes via an importin alpha/beta-dependent mechanism. By analogy to herpesviruses capsid assembly, might act as a chaperone to promote the formation of the icosahedral capsid. Structural component of the virion that provides increased stability to the particle shell through its interaction with the core-capsid bridging protein and the hexon-linking protein VIII. Fibers shedding during virus entry into host cell allows the endosome lysis protein to be exposed as a membrane-lytic peptide. Exhibits pH-independent membrane fragmentation activity and probably mediates viral rapid escape from host endosome via organellar membrane lysis. It is not clear if it then remains partially associated with the capsid and involved in the intracellular microtubule-dependent transport of capsid to the nucleus, or if it is lost during endosomal penetration. In terms of biological role, cofactor that activates the viral protease. Binds to viral protease in a 1:1 ratio. The protein is Pre-protein VI of Pantherophis guttatus (Corn snake).